Consider the following 409-residue polypeptide: MARQKFERKKPHVNIGTIGHVDHGKTTLTAAITMAMAARGGGKGKKYDDIDSAPEEKQRGITINTAHVEYETEKRHYAHVDCPGHADYVKNMITGAAQMDGAILVVSGADGPMPQTKEHILLAKQVGVPNVVVFLNKEDQVDDAELLELVELEVRETLDNYEFPGDEIPIVPGSALLALQALSENPEITPGQNPWVDKIFKLMDTVDAYIPTPERDTEKPFLMAVEDVFSITGRGTVATGRVERGSVKVGETIEIVGLRETRTTTVTGLEMFQKTLEESVAGDNVGVLLRGIQKIDIQRGMVLAKPGSITPHTKFTAQVYILTRDEGGRHTPFFAGYRPQFYVRTTDVTGKIETFRTDDDQPTQMVMPGDRIKMEVELIQPIAIEKGMRFAIREGGRTVGAGVVSAIVL.

The 205-residue stretch at 10-214 (KPHVNIGTIG…TVDAYIPTPE (205 aa)) folds into the tr-type G domain. The tract at residues 19–26 (GHVDHGKT) is G1. GTP is bound at residue 19-26 (GHVDHGKT). Residue Thr26 coordinates Mg(2+). Residues 60–64 (GITIN) are G2. Residues 81–84 (DCPG) form a G3 region. Residues 81–85 (DCPGH) and 136–139 (NKED) contribute to the GTP site. Residues 136–139 (NKED) are G4. The segment at 174-176 (SAL) is G5.

The protein belongs to the TRAFAC class translation factor GTPase superfamily. Classic translation factor GTPase family. EF-Tu/EF-1A subfamily.

It is found in the plastid. It localises to the chloroplast. It carries out the reaction GTP + H2O = GDP + phosphate + H(+). In terms of biological role, GTP hydrolase that promotes the GTP-dependent binding of aminoacyl-tRNA to the A-site of ribosomes during protein biosynthesis. The polypeptide is Elongation factor Tu, chloroplastic (tufA) (Pleurastrum terricola (Filamentous green alga)).